The primary structure comprises 350 residues: Sulfate-binding protein (350 aa).

The signal sequence occupies residues 1-40 (MKTAWTRRSFLQSAALATATVITIAACGGNNQSSSGGSGQ).

Belongs to the prokaryotic sulfate-binding protein family.

The protein localises to the periplasm. Its function is as follows. This protein specifically binds sulfate and is involved in its transmembrane transport. The polypeptide is Sulfate-binding protein (sbpA) (Synechococcus elongatus (strain ATCC 33912 / PCC 7942 / FACHB-805) (Anacystis nidulans R2)).